The following is a 119-amino-acid chain: MNLDQYLPVLLFILVGIAVGVVPLVLGYVLGPNRPDAAKNSPYECGFEAFDDARMKFDVRYYLVAILFILFDLEIAFLFPWAVTLQQVGMAGFVAVLIFLTILVVGFAYEWKKGALDWE.

The next 3 membrane-spanning stretches (helical) occupy residues 9–29 (VLLF…LGYV), 63–83 (LVAI…PWAV), and 88–108 (VGMA…VGFA).

This sequence belongs to the complex I subunit 3 family. As to quaternary structure, NDH-1 is composed of 14 different subunits. Subunits NuoA, H, J, K, L, M, N constitute the membrane sector of the complex.

It is found in the cell inner membrane. It carries out the reaction a quinone + NADH + 5 H(+)(in) = a quinol + NAD(+) + 4 H(+)(out). In terms of biological role, NDH-1 shuttles electrons from NADH, via FMN and iron-sulfur (Fe-S) centers, to quinones in the respiratory chain. The immediate electron acceptor for the enzyme in this species is believed to be ubiquinone. Couples the redox reaction to proton translocation (for every two electrons transferred, four hydrogen ions are translocated across the cytoplasmic membrane), and thus conserves the redox energy in a proton gradient. The sequence is that of NADH-quinone oxidoreductase subunit A from Verminephrobacter eiseniae (strain EF01-2).